Reading from the N-terminus, the 359-residue chain is Outer membrane protein assembly factor BamC (359 aa).

A signal peptide spans 1-34; that stretch reads MASLFDKNSFQMTRLQKTAVAKVVGVSLIMLLAA. Residue Cys35 is the site of N-palmitoyl cysteine attachment. Cys35 carries the S-diacylglycerol cysteine lipid modification.

It belongs to the BamC family. In terms of assembly, part of the Bam complex, which is composed of the outer membrane protein BamA, and four lipoproteins BamB, BamC, BamD and BamE.

It localises to the cell outer membrane. Functionally, part of the outer membrane protein assembly complex, which is involved in assembly and insertion of beta-barrel proteins into the outer membrane. This chain is Outer membrane protein assembly factor BamC, found in Rahnella sp. (strain Y9602).